A 426-amino-acid polypeptide reads, in one-letter code: Serine--tRNA ligase (426 aa).

228–230 provides a ligand contact to L-serine; it reads TSE. ATP-binding positions include 259–261 and Val275; that span reads RRE. Position 282 (Glu282) interacts with L-serine. Residue 346–349 coordinates ATP; the sequence is ELTS. Thr386 is an L-serine binding site.

It belongs to the class-II aminoacyl-tRNA synthetase family. Type-1 seryl-tRNA synthetase subfamily. As to quaternary structure, homodimer. The tRNA molecule binds across the dimer.

The protein resides in the cytoplasm. It carries out the reaction tRNA(Ser) + L-serine + ATP = L-seryl-tRNA(Ser) + AMP + diphosphate + H(+). It catalyses the reaction tRNA(Sec) + L-serine + ATP = L-seryl-tRNA(Sec) + AMP + diphosphate + H(+). It functions in the pathway aminoacyl-tRNA biosynthesis; selenocysteinyl-tRNA(Sec) biosynthesis; L-seryl-tRNA(Sec) from L-serine and tRNA(Sec): step 1/1. In terms of biological role, catalyzes the attachment of serine to tRNA(Ser). Is also able to aminoacylate tRNA(Sec) with serine, to form the misacylated tRNA L-seryl-tRNA(Sec), which will be further converted into selenocysteinyl-tRNA(Sec). The chain is Serine--tRNA ligase from Arthrobacter sp. (strain FB24).